Here is a 749-residue protein sequence, read N- to C-terminus: Protein phosphatase 1E (749 aa).

The disordered stretch occupies residues 21 to 128 (EFRGPCGGGE…PPLPPLPRPL (108 aa)). Repeat copies occupy residues 31 to 32 (PE), 33 to 34 (PE), and 35 to 36 (PE). The segment at 31 to 44 (PEPEPESEPEPEPE) is 7 X 2 AA tandem repeats of P-E. Residues 31-45 (PEPEPESEPEPEPEA) show a composition bias toward acidic residues. A 4; approximate repeat occupies 37 to 38 (SE). 3 consecutive repeat copies span residues 39 to 40 (PE), 41 to 42 (PE), and 43 to 44 (PE). Over residues 46–55 (ELVAAEAAEA) the composition is skewed to low complexity. Residues 69-102 (ATEEGEQDQDPEPEDEAVEEETATEGEEEEEEEA) show a composition bias toward acidic residues. Positions 110 to 126 (VPPPPQPQLPPLPPLPR) are enriched in pro residues. The 262-residue stretch at 224-485 (QIYYETSIHA…DNITVIVVFL (262 aa)) folds into the PPM-type phosphatase domain. Mn(2+) is bound by residues D270, G271, D432, and D476. Positions 495 to 537 (SEESEWTENSFQGGQEDGGDDKETHGECKRPWPQHQCSAPADL) are disordered. The span at 515–524 (DKETHGECKR) shows a compositional bias: basic and acidic residues. Phosphoserine is present on residues S532 and S545. Positions 608–627 (VKSSLPERSGAGEPRVSFNL) are disordered.

It belongs to the PP2C family. In terms of assembly, heterotrimer. Interacts with PAX1 and ARHGEF6 (or ARHGEF7). Mg(2+) serves as cofactor. The cofactor is Mn(2+).

Its subcellular location is the nucleus. The protein resides in the cytoplasm. It carries out the reaction O-phospho-L-seryl-[protein] + H2O = L-seryl-[protein] + phosphate. The catalysed reaction is O-phospho-L-threonyl-[protein] + H2O = L-threonyl-[protein] + phosphate. Its function is as follows. Protein phosphatase that inactivates multifunctional CaM kinases such as CAMK4 and CAMK2. Dephosphorylates and inactivates PAK. May play a role in the inhibition of actin fiber stress breakdown and in morphological changes driven by TNK2/CDC42. Dephosphorylates PRKAA2. The polypeptide is Protein phosphatase 1E (Ppm1e) (Mus musculus (Mouse)).